We begin with the raw amino-acid sequence, 398 residues long: Nocardicin C N-oxygenase (398 aa).

Positions 63–90 (RARAAGREETPRVTPEAAPAGSMLSMDP) are disordered. Positions 93, 97, 289, 345, and 347 each coordinate heme.

This sequence belongs to the cytochrome P450 family. Heme is required as a cofactor.

It carries out the reaction nocardicin C + 4 reduced [2Fe-2S]-[ferredoxin] + 2 O2 + 2 H(+) = nocardicin A + 4 oxidized [2Fe-2S]-[ferredoxin] + 3 H2O. It participates in antibiotic biosynthesis. Involved in the biosynthesis of the beta-lactam antibiotic nocardicin A. Catalyzes the conversion of nocardicin C to nocardicin A. Cannot use nocardicin G. The chain is Nocardicin C N-oxygenase from Nocardia uniformis subsp. tsuyamanensis.